A 69-amino-acid polypeptide reads, in one-letter code: Putative membrane protein insertion efficiency factor (69 aa).

This sequence belongs to the UPF0161 family.

It is found in the cell inner membrane. Could be involved in insertion of integral membrane proteins into the membrane. In Chromobacterium violaceum (strain ATCC 12472 / DSM 30191 / JCM 1249 / CCUG 213 / NBRC 12614 / NCIMB 9131 / NCTC 9757 / MK), this protein is Putative membrane protein insertion efficiency factor.